A 284-amino-acid chain; its full sequence is Nucleotide-binding protein Shal_3708 (284 aa).

ATP is bound at residue 8–15 (GRSGSGKS). 56-59 (DIRN) contributes to the GTP binding site.

Belongs to the RapZ-like family.

Displays ATPase and GTPase activities. The protein is Nucleotide-binding protein Shal_3708 of Shewanella halifaxensis (strain HAW-EB4).